The sequence spans 2085 residues: Protein MLP1 homolog (2085 aa).

Coiled coils occupy residues 44 to 367 (KIRE…SHDG), 399 to 513 (KATQ…HVLI), 568 to 630 (YELQ…RMKS), 675 to 1205 (ANEA…KRTQ), 1232 to 1667 (LRRE…LQQE), and 1744 to 1799 (EIEA…AAKE). Residues 365 to 398 (HDGVPGSVPQTPRANGSLLARPSSPFGTPASLRG) are disordered. The interval 934-953 (AERLRPLPTPRAPAAAEQPS) is disordered. The Nuclear localization signal motif lies at 1159 to 1166 (ERRQRLEQ). Residues 1482 to 1503 (LATATEKNTSLQQQLAASSTEQ) show a composition bias toward polar residues. Disordered stretches follow at residues 1482–1514 (LATA…AAPS) and 1567–1591 (SGGD…DEER). A compositionally biased stretch (low complexity) spans 1504–1514 (PAAAPVSAAPS). A compositionally biased stretch (polar residues) spans 1574–1584 (AETSVSAQPSA). The segment at 1816–2085 (KPPAPAQAPA…GGGGGGGGNQ (270 aa)) is disordered. Positions 1817 to 1827 (PPAPAQAPAPA) are enriched in pro residues. Low complexity-rich tracts occupy residues 1843–1858 (VAPA…QAPS), 1910–1974 (QAGQ…PVPA), and 1982–1994 (ARTA…AGPR). The segment covering 1995–2016 (GARGGRGGGFVGAGRGAGGAAG) has biased composition (gly residues). A compositionally biased stretch (low complexity) spans 2028-2040 (GGATATAAAAAAA). 2 stretches are compositionally biased toward gly residues: residues 2041 to 2051 (GGAGGSAGAGN) and 2076 to 2085 (GGGGGGGGNQ).

The nuclear pore complex (NPC) constitutes the exclusive means of nucleocytoplasmic transport. NPCs allow the passive diffusion of ions and small molecules and the active, nuclear transport receptor-mediated bidirectional transport of macromolecules such as proteins, RNAs, ribonucleoparticles (RNPs), and ribosomal subunits across the nuclear envelope. The 55-60 MDa NPC is composed of at least 28 different subunits: AMO1, ELYS, GLE1, GLE2, MLP1, NDC1, NIC96, NSP1, NUP133, NUP145, NUP152, NUP159, NUP170, NUP188, NUP192, NUP37, NUP49, NUP53, NUP56, NUP57, NUP82, NUP84, NUP85, POM152, POM33, POM34, SEC13 and SEH1. Due to its 8-fold rotational symmetry, all subunits are present with 8 copies or multiples thereof.

It is found in the nucleus. Involved in the structural and functional organization of perinuclear chromatin. Associates with the nuclear pore complex and form filamentous structures along the nuclear periphery. The sequence is that of Protein MLP1 homolog (MLP1) from Chaetomium thermophilum (strain DSM 1495 / CBS 144.50 / IMI 039719) (Thermochaetoides thermophila).